A 210-amino-acid polypeptide reads, in one-letter code: Ribosomal RNA small subunit methyltransferase G (210 aa).

S-adenosyl-L-methionine-binding positions include Gly-76, Leu-81, 127–128 (VE), and Arg-142.

This sequence belongs to the methyltransferase superfamily. RNA methyltransferase RsmG family.

It localises to the cytoplasm. It carries out the reaction guanosine(527) in 16S rRNA + S-adenosyl-L-methionine = N(7)-methylguanosine(527) in 16S rRNA + S-adenosyl-L-homocysteine. In terms of biological role, specifically methylates the N7 position of guanine in position 527 of 16S rRNA. The polypeptide is Ribosomal RNA small subunit methyltransferase G (Aliivibrio fischeri (strain ATCC 700601 / ES114) (Vibrio fischeri)).